The chain runs to 214 residues: RING-H2 finger protein ATL67 (214 aa).

A helical transmembrane segment spans residues 33–53; sequence LGFGYSIAIALGFLVLLSTVL. The RING-type; atypical zinc finger occupies 138–180; it reads CSICLCEYKEAEMLRMMPECKHYFHLCCLDAWLKLNGSCPVCR.

Belongs to the RING-type zinc finger family. ATL subfamily.

It localises to the membrane. The enzyme catalyses S-ubiquitinyl-[E2 ubiquitin-conjugating enzyme]-L-cysteine + [acceptor protein]-L-lysine = [E2 ubiquitin-conjugating enzyme]-L-cysteine + N(6)-ubiquitinyl-[acceptor protein]-L-lysine.. Its pathway is protein modification; protein ubiquitination. The polypeptide is RING-H2 finger protein ATL67 (ATL67) (Arabidopsis thaliana (Mouse-ear cress)).